The following is a 4563-amino-acid chain: Apolipoprotein B-100 (4563 aa).

Residues 1–27 form the signal peptide; it reads MDPPRPALLALLALPALLLLLLAGARA. Residues 32-126 form a heparin-binding region; sequence LENVSLVCPK…KNSEEFAAAM (95 aa). N34 is a glycosylation site (N-linked (GlcNAc...) asparagine). Cystine bridges form between C39/C88 and C78/C97. The 627-residue stretch at 46–672 folds into the Vitellogenin domain; sequence FKHLRKYTYN…PNNYLPKESM (627 aa). The N-linked (GlcNAc...) asparagine glycan is linked to N185. Cystine bridges form between C186–C212, C245–C261, C385–C390, and C478–C513. The tract at residues 232 to 306 is heparin-binding; it reads TRPLSTLISS…RFFGEGTKKM (75 aa). Residues 902–959 are heparin-binding; the sequence is NTNFFHESGLEAHVALKAGKLKFIIPSPKRPVKLLSGGNTLHLVSTTKTEVIPPLIEN. A disulfide bridge connects residues C966 and C976. N983 carries an N-linked (GlcNAc...) asparagine glycan. A lipid anchor (S-palmitoyl cysteine) is attached at C1112. Residues N1368, N1377, and N1523 are each glycosylated (N-linked (GlcNAc...) asparagine). The residue at position 2004 (K2004) is an N6-acetyllysine. Residues 2043 to 2178 are heparin-binding; sequence RDAVEKPQEF…EKLSQLQTYM (136 aa). 5 N-linked (GlcNAc...) asparagine glycosylation sites follow: N2239, N2560, N2779, N2982, and N3101. The tract at residues 3161-3236 is heparin-binding; it reads FLKTTKQSFD…KIKFDKYKAE (76 aa). Residues 3174-3184 form a basic (possible receptor binding region) region; the sequence is KAQYKKNKHRH. An intrachain disulfide couples C3194 to C3324. Residue N3224 is glycosylated (N-linked (GlcNAc...) asparagine). S3279 carries the phosphoserine modification. N3336 and N3358 each carry an N-linked (GlcNAc...) asparagine glycan. Positions 3373 to 3393 are LDL receptor binding; sequence VIDALQYKLEGTTRLTRKRGL. Positions 3383-3516 are heparin-binding; sequence GTTRLTRKRG…REYSGTIASE (134 aa). The segment at 3386–3394 is basic (possible receptor binding region); sequence RLTRKRGLK. N3411, N3465, and N3895 each carry an N-linked (GlcNAc...) asparagine glycan. Position 4048 is a phosphoserine; by FAM20C (S4048). T4052 carries the phosphothreonine modification. N-linked (GlcNAc...) asparagine glycosylation is found at N4237 and N4431.

Interacts with PCSK9. Interacts with MTTP. Interacts with AUP1. Interacts with CIDEB. Palmitoylated; structural requirement for proper assembly of the hydrophobic core of the lipoprotein particle.

The protein localises to the cytoplasm. The protein resides in the secreted. It localises to the lipid droplet. Apolipoprotein B is a major protein constituent of chylomicrons (apo B-48), LDL (apo B-100) and VLDL (apo B-100). Apo B-100 functions as a recognition signal for the cellular binding and internalization of LDL particles by the apoB/E receptor. The sequence is that of Apolipoprotein B-100 (APOB) from Homo sapiens (Human).